Reading from the N-terminus, the 128-residue chain is Large ribosomal subunit protein bL12 (128 aa).

This sequence belongs to the bacterial ribosomal protein bL12 family. In terms of assembly, homodimer. Part of the ribosomal stalk of the 50S ribosomal subunit. Forms a multimeric L10(L12)X complex, where L10 forms an elongated spine to which 2 to 4 L12 dimers bind in a sequential fashion. Binds GTP-bound translation factors.

Its function is as follows. Forms part of the ribosomal stalk which helps the ribosome interact with GTP-bound translation factors. Is thus essential for accurate translation. This Acidithiobacillus ferrooxidans (strain ATCC 23270 / DSM 14882 / CIP 104768 / NCIMB 8455) (Ferrobacillus ferrooxidans (strain ATCC 23270)) protein is Large ribosomal subunit protein bL12.